We begin with the raw amino-acid sequence, 146 residues long: Acidic phospholipase A2 2 (146 aa).

Positions 1–21 (MNPAHLLILAAVCVSSLGASS) are cleaved as a signal peptide. A propeptide spanning residues 22–27 (NRPMPL) is cleaved from the precursor. Cystine bridges form between Cys-38–Cys-98, Cys-53–Cys-145, Cys-55–Cys-71, Cys-70–Cys-126, Cys-77–Cys-119, Cys-87–Cys-112, and Cys-105–Cys-117. Positions 54, 56, and 58 each coordinate Ca(2+). His-74 is an active-site residue. Ca(2+) is bound at residue Asp-75. Asp-120 is an active-site residue.

Belongs to the phospholipase A2 family. Group I subfamily. D49 sub-subfamily. Ca(2+) is required as a cofactor. Expressed by the venom gland.

The protein resides in the secreted. It catalyses the reaction a 1,2-diacyl-sn-glycero-3-phosphocholine + H2O = a 1-acyl-sn-glycero-3-phosphocholine + a fatty acid + H(+). PLA2 catalyzes the calcium-dependent hydrolysis of the 2-acyl groups in 3-sn-phosphoglycerides. The polypeptide is Acidic phospholipase A2 2 (Naja kaouthia (Monocled cobra)).